Consider the following 634-residue polypeptide: Chaperone protein DnaK (634 aa).

Thr-197 carries the phosphothreonine; by autocatalysis modification. The span at 515–528 shows a compositional bias: basic and acidic residues; it reads LHKEDDKKRKESVD. 2 disordered regions span residues 515–536 and 595–634; these read LHKEDDKKRKESVDARNGADAI and YKAASAGKNAGGTAGGNGNAGSNGNSGAKKDDDVIDAEVE. Gly residues predominate over residues 603–615; sequence NAGGTAGGNGNAG.

The protein belongs to the heat shock protein 70 family.

Acts as a chaperone. This chain is Chaperone protein DnaK, found in Campylobacter hominis (strain ATCC BAA-381 / DSM 21671 / CCUG 45161 / LMG 19568 / NCTC 13146 / CH001A).